Here is a 391-residue protein sequence, read N- to C-terminus: Histidinol-phosphate aminotransferase (391 aa).

At Lys-248 the chain carries N6-(pyridoxal phosphate)lysine.

It belongs to the class-II pyridoxal-phosphate-dependent aminotransferase family. Histidinol-phosphate aminotransferase subfamily. In terms of assembly, homodimer. Pyridoxal 5'-phosphate serves as cofactor.

The enzyme catalyses L-histidinol phosphate + 2-oxoglutarate = 3-(imidazol-4-yl)-2-oxopropyl phosphate + L-glutamate. It participates in amino-acid biosynthesis; L-histidine biosynthesis; L-histidine from 5-phospho-alpha-D-ribose 1-diphosphate: step 7/9. The chain is Histidinol-phosphate aminotransferase from Shewanella oneidensis (strain ATCC 700550 / JCM 31522 / CIP 106686 / LMG 19005 / NCIMB 14063 / MR-1).